The primary structure comprises 501 residues: MKKISLLLASLCALFLVACSNQKQADGKLNIVTTFYPVYEFTKQVAGDTANVELLIGAGTEPHEYEPSAKAVAKIQDADTFVYENENMETWVPKLLDTLDKKKVKTIKATGDMLLLPGGEEEEGDHDHGEEGHHHEFDPHVWLSPVRAIKLVEHIRDSLSADYPDKKETFEKNAAAYIEKLQSLDKAYAEGLSQAKQKSFVTQHAAFNYLALDYGLKQVAISGLSPDAEPSAARLAELTEYVKKNKIAYIYFEENASQALANTLSKEAGVKTDVLNPLESLTEEDTKAGENYISVMEKNLKALKQTTDQEGPAIEPEKAEDTKTVQNGYFEDAAVKDRTLSDYAGNWQSVYPFLEDGTFDQVFDYKAKLTGKMTQAEYKAYYTKGYQTDVTKINITDNTMEFVQGGQSKKYTYKYVGKKILTYKKGNRGVRFLFEATDADAGQFKYVQFSDHNIAPVKAEHFHIFFGGTSQETLFEEMDNWPTYYPDNLSGQEIAQEMLAH.

Positions 1–18 are cleaved as a signal peptide; it reads MKKISLLLASLCALFLVA. C19 carries the N-palmitoyl cysteine lipid modification. C19 carries the S-diacylglycerol cysteine lipid modification. H63 contributes to the Zn(2+) binding site. The disordered stretch occupies residues 116 to 136; that stretch reads LPGGEEEEGDHDHGEEGHHHE. The interval 120-136 is his-rich loop; sequence EEEEGDHDHGEEGHHHE. Residues 125-136 show a composition bias toward basic and acidic residues; the sequence is DHDHGEEGHHHE. Residues H140, H204, and E279 each coordinate Zn(2+).

It belongs to the bacterial solute-binding protein 9 family.

It localises to the cell membrane. In terms of biological role, part of the ATP-binding cassette (ABC) transport system AdcABC involved in zinc import. Binds zinc with high affinity and specificity and delivers it to the membrane permease for translocation into the cytoplasm. Required for transformability. The sequence is that of Zinc-binding lipoprotein AdcA (adcA) from Streptococcus pneumoniae (strain ATCC BAA-255 / R6).